Reading from the N-terminus, the 183-residue chain is Intermembrane phospholipid transport system binding protein MlaD (183 aa).

The Cytoplasmic portion of the chain corresponds to 1-7 (MQTKKNE). Residues 8–28 (IWVGIFLLAALLAALFVCLKA) traverse the membrane as a helical; Signal-anchor for type II membrane protein segment. The Periplasmic portion of the chain corresponds to 29–183 (ANVTSIRTEP…ETTEPVGTTK (155 aa)). Residues 39 to 116 (TYTLYATFDN…LGEQYLALNV (78 aa)) form an MCE/MlaD region. A disordered region spans residues 155 to 183 (KGDDNKNSGDAPAAAPGNNETTEPVGTTK). Over residues 172 to 183 (NNETTEPVGTTK) the composition is skewed to polar residues.

It belongs to the MlaD family. In terms of assembly, the complex is composed of two ATP-binding proteins (MlaF), two transmembrane proteins (MlaE), two cytoplasmic solute-binding proteins (MlaB) and six periplasmic solute-binding proteins (MlaD).

The protein localises to the cell inner membrane. Its function is as follows. Part of the ABC transporter complex MlaFEDB, which is involved in a phospholipid transport pathway that maintains lipid asymmetry in the outer membrane by retrograde trafficking of phospholipids from the outer membrane to the inner membrane. MlaD functions in substrate binding with strong affinity for phospholipids and modulates ATP hydrolytic activity of the complex. The polypeptide is Intermembrane phospholipid transport system binding protein MlaD (Escherichia coli O157:H7).